A 630-amino-acid polypeptide reads, in one-letter code: Tyrosinase (630 aa).

Cu cation is bound by residues His69, His92, His101, His317, His321, and His360. The 2'-(S-cysteinyl)-histidine (Cys-His) cross-link spans 90–92; sequence CVH.

Belongs to the tyrosinase family. It depends on Cu(2+) as a cofactor.

The enzyme catalyses 2 L-dopa + O2 = 2 L-dopaquinone + 2 H2O. It carries out the reaction L-tyrosine + O2 = L-dopaquinone + H2O. This is a copper-containing oxidase that functions in the formation of pigments such as melanins and other polyphenolic compounds. The protein is Tyrosinase (tyr1) of Aspergillus fumigatus (strain ATCC MYA-4609 / CBS 101355 / FGSC A1100 / Af293) (Neosartorya fumigata).